The primary structure comprises 436 residues: UDP-N-acetylmuramate--L-alanine ligase (436 aa).

108 to 114 (GAHGKTS) provides a ligand contact to ATP.

This sequence belongs to the MurCDEF family.

The protein localises to the cytoplasm. The enzyme catalyses UDP-N-acetyl-alpha-D-muramate + L-alanine + ATP = UDP-N-acetyl-alpha-D-muramoyl-L-alanine + ADP + phosphate + H(+). It participates in cell wall biogenesis; peptidoglycan biosynthesis. In terms of biological role, cell wall formation. This chain is UDP-N-acetylmuramate--L-alanine ligase, found in Bacillus cereus (strain G9842).